The primary structure comprises 365 residues: Chorismate synthase (365 aa).

Arg48 is a binding site for NADP(+). Residues 125–127, 238–239, Gly278, 293–297, and Arg319 contribute to the FMN site; these read RSS, NA, and KPTSS.

Belongs to the chorismate synthase family. In terms of assembly, homotetramer. FMNH2 serves as cofactor.

It carries out the reaction 5-O-(1-carboxyvinyl)-3-phosphoshikimate = chorismate + phosphate. The protein operates within metabolic intermediate biosynthesis; chorismate biosynthesis; chorismate from D-erythrose 4-phosphate and phosphoenolpyruvate: step 7/7. Functionally, catalyzes the anti-1,4-elimination of the C-3 phosphate and the C-6 proR hydrogen from 5-enolpyruvylshikimate-3-phosphate (EPSP) to yield chorismate, which is the branch point compound that serves as the starting substrate for the three terminal pathways of aromatic amino acid biosynthesis. This reaction introduces a second double bond into the aromatic ring system. In Marinomonas sp. (strain MWYL1), this protein is Chorismate synthase.